The primary structure comprises 406 residues: Lissencephaly-1 homolog (406 aa).

The LisH domain occupies 7-39 (QREELNKAIADYLRSNGYESALEAFQKEAEMPG). Positions 54–81 (TSVIRLQKKVMDLEAKLAEAEKEFQSGG) form a coiled coil. Residues 74-89 (EKEFQSGGPNKKERSP) show a composition bias toward basic and acidic residues. Positions 74–99 (EKEFQSGGPNKKERSPSEWIPRPPAR) are disordered. WD repeat units lie at residues 104–145 (GHRS…RTLK), 146–185 (GHTD…NIKT), 188–227 (GHDH…CVKT), 230–269 (GHRE…CKAE), 272–329 (EHEH…CIMT), 332–371 (GHDN…CQKT), and 374–406 (AHQH…WECR).

This sequence belongs to the WD repeat LIS1/nudF family.

Its subcellular location is the cytoplasm. It localises to the cytoskeleton. The protein localises to the microtubule organizing center. The protein resides in the centrosome. Positively regulates the activity of the minus-end directed microtubule motor protein dynein. May enhance dynein-mediated microtubule sliding by targeting dynein to the microtubule plus end. Required for several dynein- and microtubule-dependent processes. The polypeptide is Lissencephaly-1 homolog (Branchiostoma floridae (Florida lancelet)).